Consider the following 676-residue polypeptide: Vitamin K-dependent protein S (676 aa).

Positions 1-24 (MRVLGGRCGALLACLLLVLPVSEA) are cleaved as a signal peptide. Positions 25 to 41 (NFLSKQQASQVLVRKRR) are excised as a propeptide. Residues 42–87 (ANSLLEETKQGNLERECIEELCNKEEAREVFENDPETDYFYPKYLV) form the Gla domain. 4-carboxyglutamate occurs at positions 47, 48, 55, 57, 60, 61, 66, 67, 70, 73, and 77. The cysteines at positions 58 and 63 are disulfide-linked. Residues 88–116 (CLRSFQTGLFTAARQSTNAYPDLRSCVNA) form a thrombin-sensitive region. Residues 117 to 155 (IPDQCSPLPCNEDGYMSCKDGKASFTCTCKPGWQGEKCE) form the EGF-like 1 domain. Disulfide bonds link Cys-121–Cys-134, Cys-126–Cys-143, Cys-145–Cys-154, Cys-161–Cys-175, Cys-171–Cys-184, Cys-186–Cys-199, Cys-205–Cys-217, Cys-212–Cys-226, Cys-228–Cys-241, Cys-247–Cys-256, Cys-252–Cys-265, Cys-267–Cys-282, and Cys-449–Cys-475. Asp-136 is subject to (3R)-3-hydroxyaspartate. Positions 157-200 (DINECKDPSNINGGCSQICDNTPGSYHCSCKNGFVMLSNKKDCK) constitute an EGF-like 2; calcium-binding domain. Positions 201–242 (DVDECSLKPSICGTAVCKNIPGDFECECPEGYRYNLKSKSCE) constitute an EGF-like 3; calcium-binding domain. The EGF-like 4; calcium-binding domain occupies 243–283 (DIDECSENMCAQLCVNYPGGYTCYCDGKKGFKLAQDQKSCE). Laminin G-like domains lie at 299-475 (LLYL…NKHC) and 484-666 (YYPG…AHSC). N-linked (GlcNAc...) asparagine glycosylation is found at Asn-499, Asn-509, and Asn-530. A disulfide bond links Cys-639 and Cys-666.

In terms of processing, the iron and 2-oxoglutarate dependent 3-hydroxylation of aspartate and asparagine is (R) stereospecific within EGF domains. As to expression, plasma.

It is found in the secreted. Anticoagulant plasma protein; it is a cofactor to activated protein C in the degradation of coagulation factors Va and VIIIa. It helps to prevent coagulation and stimulating fibrinolysis. The chain is Vitamin K-dependent protein S (PROS1) from Homo sapiens (Human).